Reading from the N-terminus, the 299-residue chain is Formin-like protein 12 (299 aa).

Residues M1–Q295 enclose the FH2 domain.

This sequence belongs to the formin-like family. Class-II subfamily.

This is Formin-like protein 12 (FH12) from Arabidopsis thaliana (Mouse-ear cress).